We begin with the raw amino-acid sequence, 212 residues long: uncharacterized protein (212 aa).

4 helical membrane-spanning segments follow: residues 20-40 (FLIG…LIIC), 70-90 (LMLL…YWLG), 155-175 (FVLI…YLGE), and 192-212 (QIVI…MEKI).

The protein belongs to the DedA family.

The protein resides in the cell membrane. This is an uncharacterized protein from Haemophilus influenzae (strain ATCC 51907 / DSM 11121 / KW20 / Rd).